A 147-amino-acid chain; its full sequence is 3-hydroxyacyl-[acyl-carrier-protein] dehydratase FabZ (147 aa).

Residue His-49 is part of the active site.

It belongs to the thioester dehydratase family. FabZ subfamily.

The protein localises to the cytoplasm. The catalysed reaction is a (3R)-hydroxyacyl-[ACP] = a (2E)-enoyl-[ACP] + H2O. Functionally, involved in unsaturated fatty acids biosynthesis. Catalyzes the dehydration of short chain beta-hydroxyacyl-ACPs and long chain saturated and unsaturated beta-hydroxyacyl-ACPs. The sequence is that of 3-hydroxyacyl-[acyl-carrier-protein] dehydratase FabZ from Syntrophotalea carbinolica (strain DSM 2380 / NBRC 103641 / GraBd1) (Pelobacter carbinolicus).